The chain runs to 126 residues: MQLNMLKCKLHQACVTDTELDYEGSCAIDANLMDAAGIREFEQIHVYNLANGARFTTYAIRGEAGSRMISMNGAAAHLCSEGDRIIICCYANVDESELDRHEPALVYCDGDNRITHQRNGIPLQVA.

Catalysis depends on S25, which acts as the Schiff-base intermediate with substrate; via pyruvic acid. S25 bears the Pyruvic acid (Ser) mark. Residue T57 participates in substrate binding. The active-site Proton donor is Y58. 73–75 (GAA) contacts substrate.

This sequence belongs to the PanD family. Heterooctamer of four alpha and four beta subunits. Pyruvate serves as cofactor. Is synthesized initially as an inactive proenzyme, which is activated by self-cleavage at a specific serine bond to produce a beta-subunit with a hydroxyl group at its C-terminus and an alpha-subunit with a pyruvoyl group at its N-terminus.

The protein resides in the cytoplasm. It catalyses the reaction L-aspartate + H(+) = beta-alanine + CO2. The protein operates within cofactor biosynthesis; (R)-pantothenate biosynthesis; beta-alanine from L-aspartate: step 1/1. Its function is as follows. Catalyzes the pyruvoyl-dependent decarboxylation of aspartate to produce beta-alanine. This Alkalilimnicola ehrlichii (strain ATCC BAA-1101 / DSM 17681 / MLHE-1) protein is Aspartate 1-decarboxylase.